The sequence spans 295 residues: Light-independent protochlorophyllide reductase iron-sulfur ATP-binding protein (295 aa).

Residues 39–44 and Lys-68 contribute to the ATP site; that span reads GIGKST. Ser-43 is a Mg(2+) binding site. 2 residues coordinate [4Fe-4S] cluster: Cys-124 and Cys-158. 209-210 contributes to the ATP binding site; the sequence is NR.

The protein belongs to the NifH/BchL/ChlL family. Homodimer. Protochlorophyllide reductase is composed of three subunits; ChlL, ChlN and ChlB. Requires [4Fe-4S] cluster as cofactor.

The enzyme catalyses chlorophyllide a + oxidized 2[4Fe-4S]-[ferredoxin] + 2 ADP + 2 phosphate = protochlorophyllide a + reduced 2[4Fe-4S]-[ferredoxin] + 2 ATP + 2 H2O. The protein operates within porphyrin-containing compound metabolism; chlorophyll biosynthesis (light-independent). Functionally, component of the dark-operative protochlorophyllide reductase (DPOR) that uses Mg-ATP and reduced ferredoxin to reduce ring D of protochlorophyllide (Pchlide) to form chlorophyllide a (Chlide). This reaction is light-independent. The L component serves as a unique electron donor to the NB-component of the complex, and binds Mg-ATP. The protein is Light-independent protochlorophyllide reductase iron-sulfur ATP-binding protein of Prochlorococcus marinus (strain MIT 9515).